Here is a 139-residue protein sequence, read N- to C-terminus: ATP synthase epsilon chain (139 aa).

It belongs to the ATPase epsilon chain family. In terms of assembly, F-type ATPases have 2 components, CF(1) - the catalytic core - and CF(0) - the membrane proton channel. CF(1) has five subunits: alpha(3), beta(3), gamma(1), delta(1), epsilon(1). CF(0) has three main subunits: a, b and c.

The protein localises to the cell membrane. Functionally, produces ATP from ADP in the presence of a proton gradient across the membrane. The polypeptide is ATP synthase epsilon chain (Enterococcus faecalis (strain ATCC 700802 / V583)).